The primary structure comprises 147 residues: Mid1-interacting protein 1-B (147 aa).

The protein belongs to the SPOT14 family.

It is found in the nucleus. The protein resides in the cytoplasm. It localises to the cytoskeleton. Its function is as follows. Involved in stabilization of microtubules. May play a role in the regulation of lipogenesis. The protein is Mid1-interacting protein 1-B of Danio rerio (Zebrafish).